The sequence spans 433 residues: Adenylosuccinate synthetase (433 aa).

GTP contacts are provided by residues 12–18 (GDEGKGK) and 40–42 (GHT). Asp13 serves as the catalytic Proton acceptor. 2 residues coordinate Mg(2+): Asp13 and Gly40. IMP is bound by residues 13-16 (DEGK), 38-41 (NAGH), Thr130, Arg144, Gln225, Thr240, and Arg304. Catalysis depends on His41, which acts as the Proton donor. Position 300-306 (300-306 (ATTGRPR)) interacts with substrate. GTP contacts are provided by residues Arg306, 332–334 (KLD), and 414–416 (SIG).

This sequence belongs to the adenylosuccinate synthetase family. In terms of assembly, homodimer. Mg(2+) serves as cofactor.

It localises to the cytoplasm. It catalyses the reaction IMP + L-aspartate + GTP = N(6)-(1,2-dicarboxyethyl)-AMP + GDP + phosphate + 2 H(+). It functions in the pathway purine metabolism; AMP biosynthesis via de novo pathway; AMP from IMP: step 1/2. Its function is as follows. Plays an important role in the de novo pathway of purine nucleotide biosynthesis. Catalyzes the first committed step in the biosynthesis of AMP from IMP. The protein is Adenylosuccinate synthetase of Geobacter sulfurreducens (strain ATCC 51573 / DSM 12127 / PCA).